A 453-amino-acid chain; its full sequence is MSPQTETKAGVGFKAGVKEYKLTYYTPEYETKDTDILAAFRVTPQPGVPPEERGAAVAAESSTGTWTTVWTDGLTSLDRYKGRCYHIEPVPGEEDQFIAYVAYPLDLFEEGSVTNMFTSIVGNVFGFKALRALRLEDLRIPVAYVKTFQGPPHGIQVERDKLNKYGRPLLECTIKPKLGLSAKNYGRAVYECLRGGLDFTKDDENVNSQPFMRWRDRFLFCAEAIYKSQAETGEIKGHYLNATAGTCEEMIKRAVFARELGVPIVMHDYLTGGFTANTSLSHYCRDNGLLLHIHRAMHAVIDRQKNHGMHFRVLAKALRMSGGDHIHSGTVVGKLEGERDITLGFVDLLRDDYIEKDRSRGIYFTQDWVSLPGVLPVASRGIHVWHMPALTEIFGDDSVLQFGGGTLGHPWGNAPGAVANRVALEACVKARNEGRDLAAEGGEIIREACKWSP.

The propeptide occupies Met1–Ser2. Residue Pro3 is modified to N-acetylproline. An N6,N6,N6-trimethyllysine modification is found at Lys14. 2 residues coordinate substrate: Asn123 and Thr173. The Proton acceptor role is filled by Lys175. Lys177 contacts substrate. Positions 201, 203, and 204 each coordinate Mg(2+). Lys201 is modified (N6-carboxylysine). His294 (proton acceptor) is an active-site residue. Residues Arg295, His327, and Ser379 each contribute to the substrate site.

This sequence belongs to the RuBisCO large chain family. Type I subfamily. Heterohexadecamer of 8 large chains and 8 small chains; disulfide-linked. The disulfide link is formed within the large subunit homodimers. Mg(2+) serves as cofactor. Post-translationally, the disulfide bond which can form in the large chain dimeric partners within the hexadecamer appears to be associated with oxidative stress and protein turnover.

Its subcellular location is the plastid. It is found in the chloroplast. It catalyses the reaction 2 (2R)-3-phosphoglycerate + 2 H(+) = D-ribulose 1,5-bisphosphate + CO2 + H2O. The catalysed reaction is D-ribulose 1,5-bisphosphate + O2 = 2-phosphoglycolate + (2R)-3-phosphoglycerate + 2 H(+). In terms of biological role, ruBisCO catalyzes two reactions: the carboxylation of D-ribulose 1,5-bisphosphate, the primary event in carbon dioxide fixation, as well as the oxidative fragmentation of the pentose substrate in the photorespiration process. Both reactions occur simultaneously and in competition at the same active site. In Valantia muralis (Wall valantia), this protein is Ribulose bisphosphate carboxylase large chain.